A 120-amino-acid chain; its full sequence is MFLLYEYDIFWAFLIISSAIPILAFLISGVLAPIRKGPEKLSSYESGIEPMGDAWLQFRIRYYMFALVFVVLDVETVFLYPWAMSFDVLGVPVFIEAFIFVLILIVGSVYAWRKGALEWS.

3 helical membrane passes run 9–29 (IFWA…LISG), 64–84 (MFAL…PWAM), and 88–108 (VLGV…IVGS).

Belongs to the complex I subunit 3 family. As to quaternary structure, NDH is composed of at least 16 different subunits, 5 of which are encoded in the nucleus.

It localises to the plastid. The protein localises to the chloroplast thylakoid membrane. It catalyses the reaction a plastoquinone + NADH + (n+1) H(+)(in) = a plastoquinol + NAD(+) + n H(+)(out). The enzyme catalyses a plastoquinone + NADPH + (n+1) H(+)(in) = a plastoquinol + NADP(+) + n H(+)(out). Functionally, NDH shuttles electrons from NAD(P)H:plastoquinone, via FMN and iron-sulfur (Fe-S) centers, to quinones in the photosynthetic chain and possibly in a chloroplast respiratory chain. The immediate electron acceptor for the enzyme in this species is believed to be plastoquinone. Couples the redox reaction to proton translocation, and thus conserves the redox energy in a proton gradient. The chain is NAD(P)H-quinone oxidoreductase subunit 3, chloroplastic from Gossypium barbadense (Sea Island cotton).